The primary structure comprises 322 residues: Peroxisomal adenine nucleotide carrier 1 (322 aa).

3 Solcar repeats span residues 5–94 (LESV…FKRV), 104–184 (IGTK…LKQH), and 202–298 (LSAF…ITAT). 6 consecutive transmembrane segments (helical) span residues 8–28 (VSEA…LYPL), 104–124 (IGTK…SVLI), 158–178 (FDGL…YTVF), 201–221 (VLSA…ATVL), 254–274 (IPGV…FKGL), and 286–306 (ALLL…ILAI).

It belongs to the mitochondrial carrier (TC 2.A.29) family. As to expression, expressed in stamens, pollen grains, seeds, leaves, cotyledons, roots, stems, flowers, hypocotyls and siliques.

It localises to the peroxisome membrane. In terms of biological role, peroxisomal adenine nucleotide transporter catalyzing the counterexchange of ATP with AMP. ATP is needed by reactions that generate acyl-CoA for peroxisomal fatty acid beta-oxidation during postgerminative growth. Required for the beta-oxidation reactions involved in auxin biosynthesis and for the conversion of seed-reserved triacylglycerols into sucrose that is necessary for growth before the onset of photosynthesis. The sequence is that of Peroxisomal adenine nucleotide carrier 1 (PNC1) from Arabidopsis thaliana (Mouse-ear cress).